Here is a 553-residue protein sequence, read N- to C-terminus: MAAPAGGGGSAVSVLAPNGRRHTVKVTPSTVLLQVLEDTCRRQDFNPCEYDLKFQRSVLDLSLQWRFANLPNNAKLEMVPASRSREGPENMVRIALQLDDGSRLQDSFCSGQTLWELLSHFPQIRECLQHPGGATPVCVYTRDEVTGEAALRGTTLQSLGLTGGSATIRFVMKCYDPVGKTPGSLGSSASAGQAAASAPLPLESGELSRGDLSRPEDADTSGPCCEHTQEKQSTRAPAAAPFVPFSGGGQRLGGPPGPTRPLTSSSAKLPKSLSSPGGPSKPKKSKSGQDPQQEQEQERERDPQQEQERERPVDREPVDREPVVCHPDLEERLQAWPAELPDEFFELTVDDVRRRLAQLKSERKRLEEAPLVTKAFREAQIKEKLERYPKVALRVLFPDRYVLQGFFRPSETVGDLRDFVRSHLGNPELSFYLFITPPKTVLDDHTQTLFQANLFPAALVHLGAEEPAGVYLEPGLLEHAISPSAADVLVARYMSRAAGSPSPLPAPDPAPKSEPAAEEGALVPPEPIPGTAQPVKRSLGKVPKWLKLPASKR.

Ala2 is modified (N-acetylalanine). Residues 182-202 (PGSLGSSASAGQAAASAPLPL) are compositionally biased toward low complexity. Residues 182–324 (PGSLGSSASA…REPVDREPVV (143 aa)) are disordered. Ser184 is modified (phosphoserine). Residues 206–217 (ELSRGDLSRPED) are compositionally biased toward basic and acidic residues. The span at 260–280 (RPLTSSSAKLPKSLSSPGGPS) shows a compositional bias: low complexity. Position 275 is a phosphoserine (Ser275). Positions 296–324 (EQERERDPQQEQERERPVDREPVDREPVV) are enriched in basic and acidic residues. The interaction with GLUT4 stretch occupies residues 317-380 (PVDREPVVCH…LVTKAFREAQ (64 aa)). In terms of domain architecture, UBX spans 386 to 462 (ERYPKVALRV…NLFPAALVHL (77 aa)). The interval 499-536 (GSPSPLPAPDPAPKSEPAAEEGALVPPEPIPGTAQPVK) is disordered. Phosphoserine occurs at positions 500 and 502. Positions 502-512 (SPLPAPDPAPK) are enriched in pro residues.

In terms of assembly, interacts with GLUT4. Interacts with VCPKMT. Interacts with VCP. Ubiquitous. Highly expressed in testis, heart, skeletal muscle and pancreas.

The protein localises to the endomembrane system. The protein resides in the endoplasmic reticulum-Golgi intermediate compartment membrane. It localises to the cytoplasm. Its subcellular location is the nucleus. Its function is as follows. Tethering protein that sequesters GLUT4-containing vesicles in the cytoplasm in the absence of insulin. Modulates the amount of GLUT4 that is available at the cell surface. Enhances VCP methylation catalyzed by VCPKMT. In Homo sapiens (Human), this protein is Tether containing UBX domain for GLUT4 (ASPSCR1).